We begin with the raw amino-acid sequence, 142 residues long: Ribosome-binding factor A (142 aa).

Residues 119–142 (EAKQKQHGVETDAEQGETKDEGDK) form a disordered region.

Belongs to the RbfA family. Monomer. Binds 30S ribosomal subunits, but not 50S ribosomal subunits or 70S ribosomes.

Its subcellular location is the cytoplasm. In terms of biological role, one of several proteins that assist in the late maturation steps of the functional core of the 30S ribosomal subunit. Associates with free 30S ribosomal subunits (but not with 30S subunits that are part of 70S ribosomes or polysomes). Required for efficient processing of 16S rRNA. May interact with the 5'-terminal helix region of 16S rRNA. The polypeptide is Ribosome-binding factor A (Shewanella halifaxensis (strain HAW-EB4)).